A 346-amino-acid polypeptide reads, in one-letter code: Protein RecA (346 aa).

79 to 86 contributes to the ATP binding site; it reads GPESSGKT.

Belongs to the RecA family.

Its subcellular location is the cytoplasm. In terms of biological role, can catalyze the hydrolysis of ATP in the presence of single-stranded DNA, the ATP-dependent uptake of single-stranded DNA by duplex DNA, and the ATP-dependent hybridization of homologous single-stranded DNAs. It interacts with LexA causing its activation and leading to its autocatalytic cleavage. The sequence is that of Protein RecA from Chlorobaculum tepidum (strain ATCC 49652 / DSM 12025 / NBRC 103806 / TLS) (Chlorobium tepidum).